Here is a 505-residue protein sequence, read N- to C-terminus: Maturase K (505 aa).

This sequence belongs to the intron maturase 2 family. MatK subfamily.

It localises to the plastid. The protein localises to the chloroplast. Its function is as follows. Usually encoded in the trnK tRNA gene intron. Probably assists in splicing its own and other chloroplast group II introns. The chain is Maturase K from Ficus carica (Common fig).